The primary structure comprises 381 residues: S-(hydroxymethyl)glutathione dehydrogenase (381 aa).

Zn(2+) is bound at residue Cys49. Position 50 (His50) interacts with NAD(+). His71, Glu72, Cys101, Cys104, Cys107, Cys115, and Cys178 together coordinate Zn(2+). Residues 203-208 (GGGIVG), Asp227, and 298-300 (IGV) contribute to the NAD(+) site.

The protein belongs to the zinc-containing alcohol dehydrogenase family. Class-III subfamily. Zn(2+) is required as a cofactor.

It catalyses the reaction a primary alcohol + NAD(+) = an aldehyde + NADH + H(+). The enzyme catalyses a secondary alcohol + NAD(+) = a ketone + NADH + H(+). It carries out the reaction S-(hydroxymethyl)glutathione + NADP(+) = S-formylglutathione + NADPH + H(+). The catalysed reaction is S-(hydroxymethyl)glutathione + NAD(+) = S-formylglutathione + NADH + H(+). It catalyses the reaction S-nitrosoglutathione + NADH + H(+) = S-(hydroxysulfenamide)glutathione + NAD(+). Functionally, oxidizes long-chain alcohols and, in the presence of glutathione, is able to oxidize formaldehyde. Also acts as a S-nitroso-glutathione reductase by catalyzing the NADH-dependent reduction of S-nitrosoglutathione, thereby regulating protein S-nitrosylation. This chain is S-(hydroxymethyl)glutathione dehydrogenase (FDH1), found in Candida maltosa (Yeast).